Reading from the N-terminus, the 702-residue chain is Ribosomal RNA large subunit methyltransferase K/L (702 aa).

Residues 43–154 (LVYQSLMWSR…KETASIALDL (112 aa)) form the THUMP domain.

The protein belongs to the methyltransferase superfamily. RlmKL family.

The protein localises to the cytoplasm. The catalysed reaction is guanosine(2445) in 23S rRNA + S-adenosyl-L-methionine = N(2)-methylguanosine(2445) in 23S rRNA + S-adenosyl-L-homocysteine + H(+). The enzyme catalyses guanosine(2069) in 23S rRNA + S-adenosyl-L-methionine = N(2)-methylguanosine(2069) in 23S rRNA + S-adenosyl-L-homocysteine + H(+). In terms of biological role, specifically methylates the guanine in position 2445 (m2G2445) and the guanine in position 2069 (m7G2069) of 23S rRNA. In Escherichia coli O139:H28 (strain E24377A / ETEC), this protein is Ribosomal RNA large subunit methyltransferase K/L.